The primary structure comprises 1040 residues: Multidrug resistance protein MdtB (1040 aa).

A run of 12 helical transmembrane segments spans residues 16-36 (FIMR…AGII), 347-367 (LMMA…NIPA), 369-389 (IIPG…MVFL), 396-416 (LTLM…IVVI), 440-460 (IGFT…PLLF), 472-492 (FAIT…TLTP), 537-557 (WLTL…WVFI), 863-883 (LGST…VLGI), 888-908 (FIHP…ALLA), 911-931 (IAGS…IGIV), 968-988 (ILMT…STGV), and 998-1018 (IGMV…TPVI).

Belongs to the resistance-nodulation-cell division (RND) (TC 2.A.6) family. MdtB subfamily. In terms of assembly, part of a tripartite efflux system composed of MdtA, MdtB and MdtC. MdtB forms a heteromultimer with MdtC.

The protein resides in the cell inner membrane. In terms of biological role, the MdtABC tripartite complex confers resistance against novobiocin and deoxycholate. The sequence is that of Multidrug resistance protein MdtB from Escherichia coli O157:H7 (strain EC4115 / EHEC).